The chain runs to 490 residues: Phosphoglucosamine mutase (490 aa).

The active-site Phosphoserine intermediate is S139. Mg(2+) contacts are provided by S139, D279, D281, and D283. Residue S139 is modified to Phosphoserine.

The protein belongs to the phosphohexose mutase family. Mg(2+) is required as a cofactor. In terms of processing, activated by phosphorylation.

The catalysed reaction is alpha-D-glucosamine 1-phosphate = D-glucosamine 6-phosphate. Catalyzes the conversion of glucosamine-6-phosphate to glucosamine-1-phosphate. This Trichormus variabilis (strain ATCC 29413 / PCC 7937) (Anabaena variabilis) protein is Phosphoglucosamine mutase.